The following is a 295-amino-acid chain: Pyridoxal 5'-phosphate synthase subunit PdxS (295 aa).

Position 25 (aspartate 25) interacts with D-ribose 5-phosphate. Lysine 82 (schiff-base intermediate with D-ribose 5-phosphate) is an active-site residue. D-ribose 5-phosphate is bound at residue glycine 154. Arginine 166 is a D-glyceraldehyde 3-phosphate binding site. D-ribose 5-phosphate-binding positions include glycine 215 and 236–237 (GS).

It belongs to the PdxS/SNZ family. As to quaternary structure, in the presence of PdxT, forms a dodecamer of heterodimers.

It catalyses the reaction aldehydo-D-ribose 5-phosphate + D-glyceraldehyde 3-phosphate + L-glutamine = pyridoxal 5'-phosphate + L-glutamate + phosphate + 3 H2O + H(+). Its pathway is cofactor biosynthesis; pyridoxal 5'-phosphate biosynthesis. Catalyzes the formation of pyridoxal 5'-phosphate from ribose 5-phosphate (RBP), glyceraldehyde 3-phosphate (G3P) and ammonia. The ammonia is provided by the PdxT subunit. Can also use ribulose 5-phosphate and dihydroxyacetone phosphate as substrates, resulting from enzyme-catalyzed isomerization of RBP and G3P, respectively. This Staphylococcus epidermidis (strain ATCC 35984 / DSM 28319 / BCRC 17069 / CCUG 31568 / BM 3577 / RP62A) protein is Pyridoxal 5'-phosphate synthase subunit PdxS.